The primary structure comprises 605 residues: Probable potassium transport system protein Kup (605 aa).

12 helical membrane passes run 18-38, 46-66, 97-117, 138-158, 169-189, 204-224, 247-267, 287-307, 339-359, 368-388, 395-415, and 418-438; these read GLVFGDIGTSPIYTLTVIIAL, ILGIISLIVWTLIILVHLEYA, MAFVTFLTYLGVALLMGDGVI, GLSQNTLILIAGTIALFLFVF, AFGPIMVLWFAALALSGAISV, AISFLMHNGLPGFFVLSEVIL, AWYFVFVALVINYLGQGAFII, FYIPFLILTILATIIASQALI, IYIGSVNWLLLCLVILIMLVF, AYGFAVTGTMVITGIMMTMIF, WKVPLALFVTLVDVVFLVSNC, and LPHGGYWSLILASVPLAVILI.

This sequence belongs to the HAK/KUP transporter (TC 2.A.72) family.

It is found in the cell inner membrane. It catalyses the reaction K(+)(in) + H(+)(in) = K(+)(out) + H(+)(out). Transport of potassium into the cell. Likely operates as a K(+):H(+) symporter. This is Probable potassium transport system protein Kup from Pelobacter propionicus (strain DSM 2379 / NBRC 103807 / OttBd1).